Reading from the N-terminus, the 166-residue chain is Ribonuclease H2 subunit C (166 aa).

Position 1 is an N-acetylmethionine (M1).

Belongs to the RNase H2 subunit C family. As to quaternary structure, the RNase H2 complex is a heterotrimer composed of the catalytic subunit RNASEH2A and the non-catalytic subunits RNASEH2B and RNASEH2C.

The protein resides in the nucleus. Functionally, non catalytic subunit of RNase H2, an endonuclease that specifically degrades the RNA of RNA:DNA hybrids. Participates in DNA replication, possibly by mediating the removal of lagging-strand Okazaki fragment RNA primers during DNA replication. Mediates the excision of single ribonucleotides from DNA:RNA duplexes. This is Ribonuclease H2 subunit C (Rnaseh2c) from Mus musculus (Mouse).